The following is a 160-amino-acid chain: Phosphopantetheine adenylyltransferase (160 aa).

Ser9 lines the substrate pocket. ATP-binding positions include 9–10 and His17; that span reads SF. Residues Lys41, Val73, and Lys87 each coordinate substrate. Residues 88-90, Glu98, and 122-128 contribute to the ATP site; these read GLR and YSFVSSS.

The protein belongs to the bacterial CoaD family. As to quaternary structure, homohexamer. The cofactor is Mg(2+).

Its subcellular location is the cytoplasm. The enzyme catalyses (R)-4'-phosphopantetheine + ATP + H(+) = 3'-dephospho-CoA + diphosphate. It participates in cofactor biosynthesis; coenzyme A biosynthesis; CoA from (R)-pantothenate: step 4/5. Functionally, reversibly transfers an adenylyl group from ATP to 4'-phosphopantetheine, yielding dephospho-CoA (dPCoA) and pyrophosphate. The protein is Phosphopantetheine adenylyltransferase of Mycobacterium avium (strain 104).